A 638-amino-acid polypeptide reads, in one-letter code: DEAD-box ATP-dependent RNA helicase 52B (638 aa).

Composition is skewed to low complexity over residues 1-21 (MRSS…AAAA) and 40-67 (GQAA…VGQP). Residues 1-129 (MRSSWADSAA…WDRRDREPDP (129 aa)) form a disordered region. The segment covering 79 to 112 (VNGGGGGGGGSVGGSRQGFGAGGRGGGGGGGGGA) has biased composition (gly residues). Over residues 119-128 (GWDRRDREPD) the composition is skewed to basic and acidic residues. The Q motif signature appears at 169-197 (NTFAEIDLGDALNENIRRCKYVKPTPVQR). The region spanning 200-384 (IPISIAGRDL…SDFLADYIFL (185 aa)) is the Helicase ATP-binding domain. 213–220 (AQTGSGKT) is an ATP binding site. The DEAD box motif lies at 328-331 (DEAD). The region spanning 411–562 (YLMDLLHAQR…EVPQWLERYA (152 aa)) is the Helicase C-terminal domain. The disordered stretch occupies residues 565–638 (SSFGGGGGRN…GGQGFSSAWD (74 aa)). Gly residues predominate over residues 567–583 (FGGGGGRNRRSGGGARF). Over residues 584 to 593 (GGRDFRRDRG) the composition is skewed to basic and acidic residues. A compositionally biased stretch (gly residues) spans 594–632 (SGGGGYGGGGGGYGGGGYGGGGGGGGYGGGSSYGGGGQG).

It belongs to the DEAD box helicase family. DDX3/DED1 subfamily.

It catalyses the reaction ATP + H2O = ADP + phosphate + H(+). The protein is DEAD-box ATP-dependent RNA helicase 52B (PL10B) of Oryza sativa subsp. japonica (Rice).